A 131-amino-acid chain; its full sequence is DNA-directed RNA polymerase subunit Rpo8 (131 aa).

This sequence belongs to the archaeal Rpo8 RNA polymerase subunit family. In terms of assembly, part of the 13-subunit RNA polymerase complex. Interacts with Rpo1N on the periphery of the clamp head.

The protein localises to the cytoplasm. It catalyses the reaction RNA(n) + a ribonucleoside 5'-triphosphate = RNA(n+1) + diphosphate. Its function is as follows. DNA-dependent RNA polymerase (RNAP) catalyzes the transcription of DNA into RNA using the four ribonucleoside triphosphates as substrates. In Saccharolobus shibatae (strain ATCC 51178 / DSM 5389 / JCM 8931 / NBRC 15437 / B12) (Sulfolobus shibatae), this protein is DNA-directed RNA polymerase subunit Rpo8.